A 376-amino-acid polypeptide reads, in one-letter code: Putative 12-oxophytodienoate reductase 13 (376 aa).

Residues 25–27 (PLT), Ala-58, and Gln-99 contribute to the FMN site. Residue 165–168 (HGAH) participates in substrate binding. Residues Arg-217, Gly-301, and 322-323 (GR) each bind FMN.

This sequence belongs to the NADH:flavin oxidoreductase/NADH oxidase family. FMN serves as cofactor.

In terms of biological role, putative oxophytodienoate reductase that may be involved in the biosynthesis or metabolism of oxylipin signaling molecules. This chain is Putative 12-oxophytodienoate reductase 13 (OPR13), found in Oryza sativa subsp. japonica (Rice).